A 657-amino-acid chain; its full sequence is Pyoverdine export ATP-binding/permease protein PvdT (657 aa).

The region spanning 6-245 (IDLQDIRKSY…ASTNPGALQA (240 aa)) is the ABC transporter domain. 43 to 50 (GASGSGKS) contributes to the ATP binding site. The next 4 membrane-spanning stretches (helical) occupy residues 285 to 305 (ALTL…LAVG), 539 to 559 (IAAI…LMTV), 590 to 610 (LSVV…GVLI), and 620 to 640 (LVAI…FGFM).

It belongs to the ABC transporter superfamily. Macrolide exporter (TC 3.A.1.122) family. Part of the tripartite efflux system PvdRT-OpmQ, which is composed of an inner membrane component with both ATPase and permease domains, PvdT, a periplasmic membrane fusion protein, PvdR, and an outer membrane component, OpmQ.

It is found in the cell inner membrane. Functionally, part of the tripartite efflux system PvdRT-OpmQ required for the secretion into the extracellular milieu of the siderophore pyoverdine (PVD), which is involved in iron acquisition. This subunit binds PVD and drives its secretion by hydrolyzing ATP. The system is responsible for export of newly synthesized PVD after the final steps of biosynthesis have taken place in the periplasm. It is also responsible for recycling of PVD after internalization of ferri-PVD into the periplasm by the outer-membrane receptor FpvA and release of iron from PVD, thus making PVD available for new cycles of iron uptake. This Pseudomonas fluorescens (strain Pf0-1) protein is Pyoverdine export ATP-binding/permease protein PvdT.